The sequence spans 149 residues: UPF0178 protein VFMJ11_0615 (149 aa).

The protein belongs to the UPF0178 family.

The protein is UPF0178 protein VFMJ11_0615 of Aliivibrio fischeri (strain MJ11) (Vibrio fischeri).